The following is a 327-amino-acid chain: Transcription factor bHLH48 (327 aa).

Residues 137 to 179 (EPAETDSMVENQNQSYSSGKRKEREKKVKSSTKKNKSSVESDK) are disordered. The region spanning 191–241 (QATDNHSLAERARREKINARMKLLQELVPGCDKIQGTALVLDEIINHVQTL) is the bHLH domain.

In terms of assembly, homodimer. As to expression, expressed in leaves, stems, and flowers.

It is found in the nucleus. This Arabidopsis thaliana (Mouse-ear cress) protein is Transcription factor bHLH48 (BHLH48).